The following is a 329-amino-acid chain: Bifunctional muramidase/DL-endopeptidase CwlT (329 aa).

An N-terminal signal peptide occupies residues M1–T29. Residues R59 to V192 form a muramidase region. Positions M206 to K329 constitute a NlpC/P60 domain. The active-site Nucleophile is C237. The active-site Proton acceptor is the H290. N302 is a catalytic residue.

This sequence belongs to the peptidase C40 family.

Its subcellular location is the secreted. It catalyses the reaction Hydrolysis of (1-&gt;4)-beta-linkages between N-acetylmuramic acid and N-acetyl-D-glucosamine residues in a peptidoglycan and between N-acetyl-D-glucosamine residues in chitodextrins.. Exhibits both muramidase and DL-endopeptidase activities. The N-terminal region acts as a N-acetylmuramidase, which cleaves the bond between N-acetylmuramic acid and N-acetyl-D-glucosamine (MurNAc-GlcNAc) in peptidoglycan. The C-terminal region acts as a DL-endopeptidase that cleaves the bond between D-gamma-glutamate and meso-diaminopimelic acid. Cannot degrade purified B.anthracis peptidoglycan, which differ from those of B.subtilis. CwlT is required for ICEBs1 conjugation: the muramidase activity is essential, whereas the peptidase activity is partially dispensable for transfer of ICEBs1. The chain is Bifunctional muramidase/DL-endopeptidase CwlT from Bacillus subtilis (strain 168).